The sequence spans 306 residues: Ankyrin repeat domain-containing protein 23 (306 aa).

Positions 41 to 90 form a coiled coil; the sequence is QEAVAREKLKLEEEKRKKLERFNSSRLTLDNLTDLENLVQRRRKKRQRHK. The segment at 78–107 is disordered; the sequence is LVQRRRKKRQRHKVPPREPESGAEPQPQVP. Over residues 80–91 the composition is skewed to basic residues; that stretch reads QRRRKKRQRHKV. ANK repeat units lie at residues 144 to 173, 177 to 206, 210 to 239, and 243 to 272; these read LHRT…AIEV, LDRT…QVNA, IWST…HINA, and EGDT…KLGV. Residues 179 to 196 form an interaction with TTN region; sequence RTPVFWACRGGHLDILKR.

As to quaternary structure, interacts with titin/TTN and MYPN.

Its subcellular location is the nucleus. In terms of biological role, may be involved in the energy metabolism. Could be a molecular link between myofibrillar stretch-induced signaling pathways and muscle gene expression. The chain is Ankyrin repeat domain-containing protein 23 (Ankrd23) from Mus musculus (Mouse).